The chain runs to 186 residues: Lipid A palmitoyltransferase PagP (186 aa).

Residues 1–25 (MNVSKYVAIFSFVFIQLISVGKVFA) form the signal peptide. Catalysis depends on residues histidine 58, aspartate 101, and serine 102.

This sequence belongs to the lipid A palmitoyltransferase family. In terms of assembly, homodimer.

Its subcellular location is the cell outer membrane. It carries out the reaction lipid A (E. coli) + a 1-hexadecanoyl-2-acyl-sn-glycero-3-phosphocholine = hepta-acyl lipid A (E. coli) + a 2-acyl-sn-glycero-3-phosphocholine. The enzyme catalyses lipid IIA + a 1-hexadecanoyl-2-acyl-sn-glycero-3-phosphocholine = lipid IIB + a 2-acyl-sn-glycero-3-phosphocholine. The catalysed reaction is lipid IVA (E. coli) + a 1-hexadecanoyl-2-acyl-sn-glycero-3-phosphocholine = lipid IVB (E. coli) + a 2-acyl-sn-glycero-3-phosphocholine. Functionally, transfers a palmitate residue from the sn-1 position of a phospholipid to the N-linked hydroxymyristate on the proximal unit of lipid A or its precursors. The protein is Lipid A palmitoyltransferase PagP of Escherichia coli O157:H7.